The chain runs to 711 residues: Ribosomal RNA large subunit methyltransferase K/L (711 aa).

Residues 43 to 154 enclose the THUMP domain; that stretch reads TLYRTLLWSR…RENLVISLDL (112 aa).

It belongs to the methyltransferase superfamily. RlmKL family.

The protein localises to the cytoplasm. It catalyses the reaction guanosine(2445) in 23S rRNA + S-adenosyl-L-methionine = N(2)-methylguanosine(2445) in 23S rRNA + S-adenosyl-L-homocysteine + H(+). It carries out the reaction guanosine(2069) in 23S rRNA + S-adenosyl-L-methionine = N(2)-methylguanosine(2069) in 23S rRNA + S-adenosyl-L-homocysteine + H(+). Its function is as follows. Specifically methylates the guanine in position 2445 (m2G2445) and the guanine in position 2069 (m7G2069) of 23S rRNA. The sequence is that of Ribosomal RNA large subunit methyltransferase K/L from Haemophilus influenzae (strain PittGG).